The primary structure comprises 100 residues: Insertion element IS600 uncharacterized 11 kDa protein (100 aa).

It belongs to the transposase 8 family.

This is Insertion element IS600 uncharacterized 11 kDa protein from Shigella sonnei.